A 723-amino-acid chain; its full sequence is Polyribonucleotide nucleotidyltransferase (723 aa).

Residues Asp-488 and Asp-494 each coordinate Mg(2+). Positions 555-614 constitute a KH domain; the sequence is PKIITLNIKPEKIKDVIGPGGKQINAIIEETGVKIDIEQDGTVYIASQDQAMNRKAIAII. The S1 motif domain maps to 624-692; the sequence is GEVYTGKVRR…HQGRVNLSRK (69 aa). The tract at residues 692–723 is disordered; sequence KALLEKKEQPEGDKKPQAEKKFYPKTKKPESK. A compositionally biased stretch (basic and acidic residues) spans 693-723; it reads ALLEKKEQPEGDKKPQAEKKFYPKTKKPESK.

This sequence belongs to the polyribonucleotide nucleotidyltransferase family. Mg(2+) serves as cofactor.

It is found in the cytoplasm. The catalysed reaction is RNA(n+1) + phosphate = RNA(n) + a ribonucleoside 5'-diphosphate. Its function is as follows. Involved in mRNA degradation. Catalyzes the phosphorolysis of single-stranded polyribonucleotides processively in the 3'- to 5'-direction. This is Polyribonucleotide nucleotidyltransferase from Listeria innocua serovar 6a (strain ATCC BAA-680 / CLIP 11262).